We begin with the raw amino-acid sequence, 282 residues long: 4-diphosphocytidyl-2-C-methyl-D-erythritol kinase (282 aa).

Residue lysine 11 is part of the active site. 93-103 (LVSAGLAGGSA) is an ATP binding site. Residue aspartate 133 is part of the active site.

This sequence belongs to the GHMP kinase family. IspE subfamily.

The enzyme catalyses 4-CDP-2-C-methyl-D-erythritol + ATP = 4-CDP-2-C-methyl-D-erythritol 2-phosphate + ADP + H(+). It participates in isoprenoid biosynthesis; isopentenyl diphosphate biosynthesis via DXP pathway; isopentenyl diphosphate from 1-deoxy-D-xylulose 5-phosphate: step 3/6. Functionally, catalyzes the phosphorylation of the position 2 hydroxy group of 4-diphosphocytidyl-2C-methyl-D-erythritol. This is 4-diphosphocytidyl-2-C-methyl-D-erythritol kinase from Ehrlichia canis (strain Jake).